The chain runs to 494 residues: UDP-glucose 6-dehydrogenase (494 aa).

Residues 11 to 16 (GAGYVG), Asp36, Arg41, and 89 to 93 (VNTPT) contribute to the NAD(+) site. Positions 88 to 110 (SVNTPTKTYGMGKGRAADLKYIE) are disordered. An N6-acetyllysine modification is found at Lys107. An allosteric switch region region spans residues 129–135 (KSTVPVR). Position 130–132 (130–132 (STV)) interacts with NAD(+). Glu161 acts as the Proton donor/acceptor in catalysis. Substrate-binding positions include 161–165 (EFLAE), 220–224 (KLAAN), Arg260, and 267–273 (KASVGFG). Glu165 lines the NAD(+) pocket. The active-site Proton donor/acceptor is the Lys220. The active-site Nucleophile is the Cys276. 276–279 (CFQK) is an NAD(+) binding site. Residues 321 to 325 (SLFNT) form an important for formation of active hexamer structure region. 338–339 (FK) contacts substrate. Arg346 contributes to the NAD(+) binding site. Arg442 serves as a coordination point for substrate. Positions 466 to 494 (VSSKRIPYAPSGEIPKFSLQDPPNKKPKV) are disordered. Ser476 is modified (phosphoserine).

The protein belongs to the UDP-glucose/GDP-mannose dehydrogenase family. In terms of assembly, homohexamer.

The enzyme catalyses UDP-alpha-D-glucose + 2 NAD(+) + H2O = UDP-alpha-D-glucuronate + 2 NADH + 3 H(+). It participates in nucleotide-sugar biosynthesis; UDP-alpha-D-glucuronate biosynthesis; UDP-alpha-D-glucuronate from UDP-alpha-D-glucose: step 1/1. Its activity is regulated as follows. UDP-alpha-D-xylose (UDX) acts as a feedback inhibitor. It binds at the same site as the substrate, but functions as allosteric inhibitor by triggering a conformation change that disrupts the active hexameric ring structure and gives rise to an inactive, horseshoe-shaped hexamer. Its function is as follows. Catalyzes the formation of UDP-alpha-D-glucuronate, a constituent of complex glycosaminoglycans. Required for the biosynthesis of chondroitin sulfate and heparan sulfate. Required for embryonic development via its role in the biosynthesis of glycosaminoglycans. Required for proper brain and neuronal development. The chain is UDP-glucose 6-dehydrogenase (UGDH) from Pongo abelii (Sumatran orangutan).